The chain runs to 417 residues: Serine hydroxymethyltransferase (417 aa).

(6S)-5,6,7,8-tetrahydrofolate is bound by residues Leu121 and 125 to 127 (GHL). An N6-(pyridoxal phosphate)lysine modification is found at Lys230. 355 to 357 (SPF) contacts (6S)-5,6,7,8-tetrahydrofolate.

Belongs to the SHMT family. Homodimer. Pyridoxal 5'-phosphate serves as cofactor.

The protein resides in the cytoplasm. It catalyses the reaction (6R)-5,10-methylene-5,6,7,8-tetrahydrofolate + glycine + H2O = (6S)-5,6,7,8-tetrahydrofolate + L-serine. It functions in the pathway one-carbon metabolism; tetrahydrofolate interconversion. It participates in amino-acid biosynthesis; glycine biosynthesis; glycine from L-serine: step 1/1. Its function is as follows. Catalyzes the reversible interconversion of serine and glycine with tetrahydrofolate (THF) serving as the one-carbon carrier. This reaction serves as the major source of one-carbon groups required for the biosynthesis of purines, thymidylate, methionine, and other important biomolecules. Also exhibits THF-independent aldolase activity toward beta-hydroxyamino acids, producing glycine and aldehydes, via a retro-aldol mechanism. This Legionella pneumophila (strain Corby) protein is Serine hydroxymethyltransferase.